The following is a 332-amino-acid chain: Glyceraldehyde-3-phosphate dehydrogenase 1 (332 aa).

NAD(+)-binding positions include 11 to 12 (RI), Asp-32, and Arg-77. Residues 148 to 150 (SCT), Thr-179, 208 to 209 (TG), and Arg-231 contribute to the D-glyceraldehyde 3-phosphate site. Cys-149 acts as the Nucleophile in catalysis. Asn-313 contributes to the NAD(+) binding site.

The protein belongs to the glyceraldehyde-3-phosphate dehydrogenase family. In terms of assembly, homotetramer.

The protein resides in the cytoplasm. The catalysed reaction is D-glyceraldehyde 3-phosphate + phosphate + NAD(+) = (2R)-3-phospho-glyceroyl phosphate + NADH + H(+). The protein operates within carbohydrate degradation; glycolysis; pyruvate from D-glyceraldehyde 3-phosphate: step 1/5. The protein is Glyceraldehyde-3-phosphate dehydrogenase 1 (Gapdh1) of Drosophila melanogaster (Fruit fly).